The sequence spans 112 residues: Colipase (112 aa).

The first 17 residues, 1–17 (MEKVLILLLVALAVAYA), serve as a signal peptide directing secretion. Positions 18 to 22 (VPDPR) are cleaved as a propeptide — enterostatin, activation peptide. Cystine bridges form between C34/C45, C40/C56, C44/C78, C66/C86, and C80/C104.

The protein belongs to the colipase family. As to quaternary structure, forms a 1:1 stoichiometric complex with pancreatic lipase.

The protein localises to the secreted. In terms of biological role, colipase is a cofactor of pancreatic lipase. It allows the lipase to anchor itself to the lipid-water interface. Without colipase the enzyme is washed off by bile salts, which have an inhibitory effect on the lipase. Enterostatin has a biological activity as a satiety signal. The polypeptide is Colipase (CLPS) (Bos taurus (Bovine)).